The following is a 475-amino-acid chain: Ribulose bisphosphate carboxylase large chain (475 aa).

Positions 1–2 are excised as a propeptide; sequence MS. Pro-3 is modified (N-acetylproline). At Lys-14 the chain carries N6,N6,N6-trimethyllysine. Substrate-binding residues include Asn-123 and Thr-173. The Proton acceptor role is filled by Lys-175. Position 177 (Lys-177) interacts with substrate. Lys-201, Asp-203, and Glu-204 together coordinate Mg(2+). Lys-201 carries the N6-carboxylysine modification. His-294 (proton acceptor) is an active-site residue. Substrate is bound by residues Arg-295, His-327, and Ser-379.

It belongs to the RuBisCO large chain family. Type I subfamily. As to quaternary structure, heterohexadecamer of 8 large chains and 8 small chains; disulfide-linked. The disulfide link is formed within the large subunit homodimers. The cofactor is Mg(2+). In terms of processing, the disulfide bond which can form in the large chain dimeric partners within the hexadecamer appears to be associated with oxidative stress and protein turnover.

The protein localises to the plastid. It localises to the chloroplast. It catalyses the reaction 2 (2R)-3-phosphoglycerate + 2 H(+) = D-ribulose 1,5-bisphosphate + CO2 + H2O. It carries out the reaction D-ribulose 1,5-bisphosphate + O2 = 2-phosphoglycolate + (2R)-3-phosphoglycerate + 2 H(+). RuBisCO catalyzes two reactions: the carboxylation of D-ribulose 1,5-bisphosphate, the primary event in carbon dioxide fixation, as well as the oxidative fragmentation of the pentose substrate in the photorespiration process. Both reactions occur simultaneously and in competition at the same active site. The sequence is that of Ribulose bisphosphate carboxylase large chain from Cerastium glomeratum (Sticky chickweed).